The following is a 176-amino-acid chain: Heme oxygenase HutZ (176 aa).

His-170 provides a ligand contact to heme.

It belongs to the heme oxygenase HugZ/HutZ family. Homodimer. Interacts with HutX, leading to the transfer of the heme from HutX to apo-HutZ.

It catalyses the reaction heme b + 3 AH2 + 3 O2 + 2 H(+) = biliverdin IXbeta + CO + Fe(2+) + 3 A + 3 H2O. The catalysed reaction is heme b + 3 AH2 + 3 O2 + 3 H(+) = biliverdin IXdelta + CO + Fe(2+) + 3 A + 3 H2O. Activity is pH-dependent. A proximal hydrogen bond between Asp-132 and the heme axial ligant His-170 is essential for heme degradation activity. Heme-degradation reaction is inhibited by iron chelators. Involved in heme degradation. Catalyzes the degradation of heme to biliverdin, with the release of iron. Forms biliverdin beta and delta. Binds heme with high efficiency. The protein is Heme oxygenase HutZ of Vibrio cholerae serotype O1 (strain ATCC 39315 / El Tor Inaba N16961).